The sequence spans 473 residues: Reticulon-4 receptor (473 aa).

The first 26 residues, 1-26, serve as a signal peptide directing secretion; the sequence is MKRASAGGSRLLAWVLWLQAWQVAAP. Cystine bridges form between Cys-27/Cys-33 and Cys-31/Cys-43. The region spanning 27-54 is the LRRNT domain; sequence CPGACVCYNEPKVTTSCPQQGLQAVPVG. 9 LRR repeats span residues 55–79, 81–103, 104–128, 129–152, 153–176, 178–200, 202–224, 225–248, and 250–273; these read IPAA…SFRA, RNLT…AFTG, LALL…TFHG, LGRL…LFRG, LAAL…TFRD, GNLT…AFRG, HSLD…AFRD, LGRL…ALAP, and RALQ…PLWA. N-linked (GlcNAc...) asparagine glycosylation is present at Asn-82. A glycan (N-linked (GlcNAc...) asparagine) is linked at Asn-179. The 51-residue stretch at 260 to 310 folds into the LRRCT domain; it reads NPWVCDCRARPLWAWLQKFRGSSSEVPCSLPQRLAGRDLKRLAANDLQGCA. 3 cysteine pairs are disulfide-bonded: Cys-264-Cys-287, Cys-266-Cys-335, and Cys-309-Cys-336. Residues 346-447 are disordered; it reads VLEPGRPASA…GGGTGDSEGS (102 aa). Over residues 413–429 the composition is skewed to basic residues; that stretch reads PRRRPGCSRKNRTRSHC. The span at 434 to 445 shows a compositional bias: gly residues; sequence AGSGGGGTGDSE. A lipid anchor (GPI-anchor amidated serine) is attached at Ser-447. A propeptide spans 448 to 473 (removed in mature form); that stretch reads GALPSLTCSLTPLGLALVLWTVLGPC.

Belongs to the Nogo receptor family. In terms of assembly, homodimer. Interacts with MAG. Interacts with RTN4. Interacts with NGFR. Interacts with LINGO1. Interacts with KIAA0319L. Interacts with OLFM1; this inhibits interaction with LINGO1 and NGFR. Interacts with OMG. In terms of processing, N-glycosylated. O-glycosylated. Contains terminal sialic acid groups on its glycan chains. In terms of tissue distribution, widespread in the brain but highest levels in the gray matter. Low levels in heart and kidney; not expressed in oligodendrocytes (white matter).

It localises to the cell membrane. The protein resides in the membrane raft. Its subcellular location is the cell projection. It is found in the dendrite. The protein localises to the axon. It localises to the perikaryon. In terms of biological role, receptor for RTN4, OMG and MAG. Functions as a receptor for the sialylated gangliosides GT1b and GM1. Besides, functions as a receptor for chondroitin sulfate proteoglycans. Can also bind heparin. Intracellular signaling cascades are triggered via the coreceptor NGFR. Signaling mediates activation of Rho and downstream reorganization of the actin cytoskeleton. Mediates axonal growth inhibition. Plays a role in regulating axon regeneration and neuronal plasticity in the adult central nervous system. Plays a role in postnatal brain development. Required for normal axon migration across the brain midline and normal formation of the corpus callosum. Protects motoneurons against apoptosis; protection against apoptosis is probably mediated via interaction with MAG. Acts in conjunction with RTN4 and LINGO1 in regulating neuronal precursor cell motility during cortical development. Like other family members, plays a role in restricting the number dendritic spines and the number of synapses that are formed during brain development. The chain is Reticulon-4 receptor (RTN4R) from Homo sapiens (Human).